The sequence spans 347 residues: 4-hydroxy-3-methylbut-2-en-1-yl diphosphate synthase (flavodoxin) (347 aa).

Residues Cys259, Cys262, Cys294, and Glu301 each coordinate [4Fe-4S] cluster.

The protein belongs to the IspG family. [4Fe-4S] cluster is required as a cofactor.

It carries out the reaction (2E)-4-hydroxy-3-methylbut-2-enyl diphosphate + oxidized [flavodoxin] + H2O + 2 H(+) = 2-C-methyl-D-erythritol 2,4-cyclic diphosphate + reduced [flavodoxin]. The protein operates within isoprenoid biosynthesis; isopentenyl diphosphate biosynthesis via DXP pathway; isopentenyl diphosphate from 1-deoxy-D-xylulose 5-phosphate: step 5/6. Its function is as follows. Converts 2C-methyl-D-erythritol 2,4-cyclodiphosphate (ME-2,4cPP) into 1-hydroxy-2-methyl-2-(E)-butenyl 4-diphosphate. The sequence is that of 4-hydroxy-3-methylbut-2-en-1-yl diphosphate synthase (flavodoxin) from Caldicellulosiruptor saccharolyticus (strain ATCC 43494 / DSM 8903 / Tp8T 6331).